The chain runs to 298 residues: Ribosomal protein L11 methyltransferase (298 aa).

Positions 150, 171, 193, and 232 each coordinate S-adenosyl-L-methionine.

This sequence belongs to the methyltransferase superfamily. PrmA family.

Its subcellular location is the cytoplasm. The catalysed reaction is L-lysyl-[protein] + 3 S-adenosyl-L-methionine = N(6),N(6),N(6)-trimethyl-L-lysyl-[protein] + 3 S-adenosyl-L-homocysteine + 3 H(+). Functionally, methylates ribosomal protein L11. The sequence is that of Ribosomal protein L11 methyltransferase from Chromobacterium violaceum (strain ATCC 12472 / DSM 30191 / JCM 1249 / CCUG 213 / NBRC 12614 / NCIMB 9131 / NCTC 9757 / MK).